The sequence spans 482 residues: Glycogen synthase (482 aa).

Lysine 15 provides a ligand contact to ADP-alpha-D-glucose.

This sequence belongs to the glycosyltransferase 1 family. Bacterial/plant glycogen synthase subfamily.

The catalysed reaction is [(1-&gt;4)-alpha-D-glucosyl](n) + ADP-alpha-D-glucose = [(1-&gt;4)-alpha-D-glucosyl](n+1) + ADP + H(+). It participates in glycan biosynthesis; glycogen biosynthesis. Synthesizes alpha-1,4-glucan chains using ADP-glucose. This Hydrogenobaculum sp. (strain Y04AAS1) protein is Glycogen synthase.